Here is a 247-residue protein sequence, read N- to C-terminus: Ubiquinone biosynthesis O-methyltransferase (247 aa).

4 residues coordinate S-adenosyl-L-methionine: Arg39, Gly70, Asp91, and Met134.

It belongs to the methyltransferase superfamily. UbiG/COQ3 family.

The catalysed reaction is a 3-demethylubiquinol + S-adenosyl-L-methionine = a ubiquinol + S-adenosyl-L-homocysteine + H(+). It catalyses the reaction a 3-(all-trans-polyprenyl)benzene-1,2-diol + S-adenosyl-L-methionine = a 2-methoxy-6-(all-trans-polyprenyl)phenol + S-adenosyl-L-homocysteine + H(+). It participates in cofactor biosynthesis; ubiquinone biosynthesis. In terms of biological role, O-methyltransferase that catalyzes the 2 O-methylation steps in the ubiquinone biosynthetic pathway. This is Ubiquinone biosynthesis O-methyltransferase from Cereibacter sphaeroides (strain ATCC 17025 / ATH 2.4.3) (Rhodobacter sphaeroides).